A 614-amino-acid polypeptide reads, in one-letter code: Dihydroxy-acid dehydratase (614 aa).

Residue aspartate 81 coordinates Mg(2+). Cysteine 122 lines the [2Fe-2S] cluster pocket. Residues aspartate 123 and lysine 124 each contribute to the Mg(2+) site. The residue at position 124 (lysine 124) is an N6-carboxylysine. Position 193 (cysteine 193) interacts with [2Fe-2S] cluster. Glutamate 489 contacts Mg(2+). Serine 515 functions as the Proton acceptor in the catalytic mechanism.

Belongs to the IlvD/Edd family. In terms of assembly, homodimer. Requires [2Fe-2S] cluster as cofactor. Mg(2+) is required as a cofactor.

It carries out the reaction (2R)-2,3-dihydroxy-3-methylbutanoate = 3-methyl-2-oxobutanoate + H2O. It catalyses the reaction (2R,3R)-2,3-dihydroxy-3-methylpentanoate = (S)-3-methyl-2-oxopentanoate + H2O. The protein operates within amino-acid biosynthesis; L-isoleucine biosynthesis; L-isoleucine from 2-oxobutanoate: step 3/4. It functions in the pathway amino-acid biosynthesis; L-valine biosynthesis; L-valine from pyruvate: step 3/4. Its function is as follows. Functions in the biosynthesis of branched-chain amino acids. Catalyzes the dehydration of (2R,3R)-2,3-dihydroxy-3-methylpentanoate (2,3-dihydroxy-3-methylvalerate) into 2-oxo-3-methylpentanoate (2-oxo-3-methylvalerate) and of (2R)-2,3-dihydroxy-3-methylbutanoate (2,3-dihydroxyisovalerate) into 2-oxo-3-methylbutanoate (2-oxoisovalerate), the penultimate precursor to L-isoleucine and L-valine, respectively. The sequence is that of Dihydroxy-acid dehydratase from Saccharophagus degradans (strain 2-40 / ATCC 43961 / DSM 17024).